We begin with the raw amino-acid sequence, 259 residues long: TLC domain-containing protein 4 (259 aa).

6 helical membrane passes run 6-26 (FISY…FSII), 53-73 (CVST…LAYD), 86-106 (FWVK…LLLL), 117-133 (YMVC…GYVL), 172-192 (PVLL…IAVI), and 213-233 (IGPQ…NVFW). Residues 44–246 (GKQCEWDSRC…IARGFYKVVK (203 aa)) form the TLC domain.

This sequence belongs to the TLCD4 family.

Its subcellular location is the membrane. The chain is TLC domain-containing protein 4 (tlcd4) from Xenopus tropicalis (Western clawed frog).